The following is a 763-amino-acid chain: Protein translocase subunit SecA 2 (763 aa).

Residues Q83, 101-105 (GEGKT), and D490 each bind ATP.

The protein belongs to the SecA family. As to quaternary structure, monomer and homodimer. Part of the essential Sec protein translocation apparatus which comprises SecA, SecYEG and auxiliary proteins SecDF. Other proteins may also be involved.

The protein resides in the cell membrane. The protein localises to the cytoplasm. It catalyses the reaction ATP + H2O + cellular proteinSide 1 = ADP + phosphate + cellular proteinSide 2.. Its function is as follows. Part of the Sec protein translocase complex. Interacts with the SecYEG preprotein conducting channel. Has a central role in coupling the hydrolysis of ATP to the transfer of proteins into and across the cell membrane, serving as an ATP-driven molecular motor driving the stepwise translocation of polypeptide chains across the membrane. The chain is Protein translocase subunit SecA 2 from Corynebacterium glutamicum (strain ATCC 13032 / DSM 20300 / JCM 1318 / BCRC 11384 / CCUG 27702 / LMG 3730 / NBRC 12168 / NCIMB 10025 / NRRL B-2784 / 534).